The following is a 228-amino-acid chain: uncharacterized protein (228 aa).

The N-terminal stretch at 1–16 (MILLLLALISATTAFQ) is a signal peptide. Residues 206–225 (LFQTLFFVTLSFLVGSAFAL) form a helical membrane-spanning segment.

The protein to A.fulgidus AF_1225.

The protein localises to the membrane. This is an uncharacterized protein from Archaeoglobus fulgidus (strain ATCC 49558 / DSM 4304 / JCM 9628 / NBRC 100126 / VC-16).